We begin with the raw amino-acid sequence, 230 residues long: UPF0173 metal-dependent hydrolase Mbar_A3716 (230 aa).

Belongs to the UPF0173 family.

The chain is UPF0173 metal-dependent hydrolase Mbar_A3716 from Methanosarcina barkeri (strain Fusaro / DSM 804).